A 379-amino-acid chain; its full sequence is L-lactate dehydrogenase (379 aa).

The 379-residue stretch at 1–379 (MIISASTDYR…ITSDLLVKER (379 aa)) folds into the FMN hydroxy acid dehydrogenase domain. Substrate is bound at residue Tyr-24. 2 residues coordinate FMN: Ser-106 and Gln-127. Tyr-129 is a substrate binding site. Thr-155 contacts FMN. A substrate-binding site is contributed by Arg-164. Lys-251 provides a ligand contact to FMN. Residue His-275 is the Proton acceptor of the active site. Substrate is bound at residue Arg-278. FMN is bound at residue 306 to 330 (DSGIRTGLDVVRMLALGADTVLLGR).

It belongs to the FMN-dependent alpha-hydroxy acid dehydrogenase family. In terms of assembly, homotetramer. FMN serves as cofactor.

The protein resides in the cell inner membrane. The catalysed reaction is (S)-lactate + A = pyruvate + AH2. Functionally, catalyzes the conversion of L-lactate to pyruvate. Is coupled to the respiratory chain. The protein is L-lactate dehydrogenase of Ectopseudomonas mendocina (strain ymp) (Pseudomonas mendocina).